Here is an 87-residue protein sequence, read N- to C-terminus: Alpha-toxin To2 (87 aa).

A signal peptide spans 1–20 (MIRFVLFISCFFLIGTVVEC). In terms of domain architecture, LCN-type CS-alpha/beta spans 22-84 (KDGYLMEGDG…IWDSKNNKCG (63 aa)). Intrachain disulfides connect C32/C83, C36/C58, C44/C64, and C48/C66. K85 is modified (lysine amide).

As to expression, expressed by the venom gland.

It is found in the secreted. In terms of biological role, alpha toxins bind voltage-independently at site-3 of sodium channels (Nav) and inhibit the inactivation of the activated channels, thereby blocking neuronal transmission. Affects the tetrodotoxin-sensitive sodium current permeability of F-11 rat neuroblastoma cells. Produces a dose dependent increase in amplitude and duration of the current. In Tityus obscurus (Amazonian scorpion), this protein is Alpha-toxin To2.